Reading from the N-terminus, the 242-residue chain is MDQVQFDFDSKSSCSTQTRHSANIFNKTNNMIYNNQLGTPPALPSPDYDYRMDYFHYKPVSGDVRDESADMVEAEYVDCDLKPKLSVDVNTFGGNQQFISPIELGEYKKFTPNTNPYNFLLVDDNFINLKILERVLLKLYPNCTIVKTQDSTKIMALLHSQTFDVAFLDIEMPGLTGIELAKMIRMEDKLNQVGIIAVTTKSLPCDKIIYEQAGIDHTFAKPLNYSFDHIITCIEKVLRAKI.

One can recognise a Response regulatory domain in the interval Asn-118 to Lys-236. Asp-169 is subject to 4-aspartylphosphate.

Required for stress adaptation, morphogenesis and virulence. The polypeptide is Stress response regulator protein 1 (SRR1) (Debaryomyces hansenii (strain ATCC 36239 / CBS 767 / BCRC 21394 / JCM 1990 / NBRC 0083 / IGC 2968) (Yeast)).